A 219-amino-acid polypeptide reads, in one-letter code: Poxin (219 aa).

Histidine 17 serves as the catalytic Proton donor. Residue tyrosine 138 is the Shared with catalytic histidine of dimeric partner of the active site. The active-site Proton acceptor; shared with catalytic histidine of dimeric partner is lysine 142.

The protein belongs to the poxin family. As to quaternary structure, homodimer.

The catalysed reaction is 2',3'-cGAMP + H2O = Gp(2'-5')Ap(3') + H(+). Nuclease that is responsible for viral evasion of host cGAS-STING innate immunity. Cleaves 2',3'-cGAMP which is produced by host cGAS following recognition of cytosolic DNA and blocks the subsequent 2',3'-cGAMP-mediated activation of TMEM173/STING, which normally spreads to adjacent cells and activates the interferon and NF-kappa-B immune responses. The chain is Poxin (OPG188) from Bos taurus (Bovine).